The chain runs to 471 residues: Siroheme synthase 1 (471 aa).

The interval 1–203 is precorrin-2 dehydrogenase /sirohydrochlorin ferrochelatase; sequence MDYLPLFAEL…GNSAEAEKAL (203 aa). NAD(+) is bound by residues 22–23 and 43–44; these read EI and ET. S128 is modified (phosphoserine). Residues 215-471 form a uroporphyrinogen-III C-methyltransferase region; the sequence is GEIILVGAGP…GFNASVVNLA (257 aa). P224 contacts S-adenosyl-L-methionine. Catalysis depends on D247, which acts as the Proton acceptor. K269 functions as the Proton donor in the catalytic mechanism. Residues 300 to 302, I305, 330 to 331, M382, and G411 contribute to the S-adenosyl-L-methionine site; these read GGD and TA.

This sequence in the N-terminal section; belongs to the precorrin-2 dehydrogenase / sirohydrochlorin ferrochelatase family. It in the C-terminal section; belongs to the precorrin methyltransferase family.

The enzyme catalyses uroporphyrinogen III + 2 S-adenosyl-L-methionine = precorrin-2 + 2 S-adenosyl-L-homocysteine + H(+). It carries out the reaction precorrin-2 + NAD(+) = sirohydrochlorin + NADH + 2 H(+). The catalysed reaction is siroheme + 2 H(+) = sirohydrochlorin + Fe(2+). It participates in cofactor biosynthesis; adenosylcobalamin biosynthesis; precorrin-2 from uroporphyrinogen III: step 1/1. It functions in the pathway cofactor biosynthesis; adenosylcobalamin biosynthesis; sirohydrochlorin from precorrin-2: step 1/1. The protein operates within porphyrin-containing compound metabolism; siroheme biosynthesis; precorrin-2 from uroporphyrinogen III: step 1/1. Its pathway is porphyrin-containing compound metabolism; siroheme biosynthesis; siroheme from sirohydrochlorin: step 1/1. It participates in porphyrin-containing compound metabolism; siroheme biosynthesis; sirohydrochlorin from precorrin-2: step 1/1. In terms of biological role, multifunctional enzyme that catalyzes the SAM-dependent methylations of uroporphyrinogen III at position C-2 and C-7 to form precorrin-2 via precorrin-1. Then it catalyzes the NAD-dependent ring dehydrogenation of precorrin-2 to yield sirohydrochlorin. Finally, it catalyzes the ferrochelation of sirohydrochlorin to yield siroheme. This is Siroheme synthase 1 from Klebsiella pneumoniae subsp. pneumoniae (strain ATCC 700721 / MGH 78578).